The sequence spans 295 residues: Fructose-bisphosphate aldolase class 1 (295 aa).

The Proton acceptor role is filled by Glu-176. Catalysis depends on Lys-213, which acts as the Schiff-base intermediate with dihydroxyacetone-P.

The protein belongs to the class I fructose-bisphosphate aldolase family.

The catalysed reaction is beta-D-fructose 1,6-bisphosphate = D-glyceraldehyde 3-phosphate + dihydroxyacetone phosphate. It participates in carbohydrate degradation; glycolysis; D-glyceraldehyde 3-phosphate and glycerone phosphate from D-glucose: step 4/4. This Fusobacterium nucleatum subsp. nucleatum (strain ATCC 25586 / DSM 15643 / BCRC 10681 / CIP 101130 / JCM 8532 / KCTC 2640 / LMG 13131 / VPI 4355) protein is Fructose-bisphosphate aldolase class 1.